Reading from the N-terminus, the 261-residue chain is Thiazole synthase (261 aa).

The active-site Schiff-base intermediate with DXP is Lys-102. 1-deoxy-D-xylulose 5-phosphate is bound by residues Gly-163, 189-190, and 211-212; these read AG and NT.

The protein belongs to the ThiG family. Homotetramer. Forms heterodimers with either ThiH or ThiS.

Its subcellular location is the cytoplasm. It carries out the reaction [ThiS sulfur-carrier protein]-C-terminal-Gly-aminoethanethioate + 2-iminoacetate + 1-deoxy-D-xylulose 5-phosphate = [ThiS sulfur-carrier protein]-C-terminal Gly-Gly + 2-[(2R,5Z)-2-carboxy-4-methylthiazol-5(2H)-ylidene]ethyl phosphate + 2 H2O + H(+). Its pathway is cofactor biosynthesis; thiamine diphosphate biosynthesis. In terms of biological role, catalyzes the rearrangement of 1-deoxy-D-xylulose 5-phosphate (DXP) to produce the thiazole phosphate moiety of thiamine. Sulfur is provided by the thiocarboxylate moiety of the carrier protein ThiS. In vitro, sulfur can be provided by H(2)S. This chain is Thiazole synthase, found in Myxococcus xanthus (strain DK1622).